Here is a 208-residue protein sequence, read N- to C-terminus: Uracil phosphoribosyltransferase (208 aa).

5-phospho-alpha-D-ribose 1-diphosphate-binding positions include R78, R103, and 130 to 138 (DPMLATGGS). Uracil is bound by residues I193 and 198–200 (GDA). D199 provides a ligand contact to 5-phospho-alpha-D-ribose 1-diphosphate.

It belongs to the UPRTase family. Requires Mg(2+) as cofactor.

It carries out the reaction UMP + diphosphate = 5-phospho-alpha-D-ribose 1-diphosphate + uracil. It functions in the pathway pyrimidine metabolism; UMP biosynthesis via salvage pathway; UMP from uracil: step 1/1. With respect to regulation, allosterically activated by GTP. Catalyzes the conversion of uracil and 5-phospho-alpha-D-ribose 1-diphosphate (PRPP) to UMP and diphosphate. The protein is Uracil phosphoribosyltransferase of Salmonella agona (strain SL483).